Consider the following 240-residue polypeptide: Mannose-binding protein C (240 aa).

The signal sequence occupies residues 1–18 (MSLFPSLHLLLLIVMTAS). Collagen-like domains are found at residues 39 to 61 (SPGI…KGEP) and 67 to 97 (GLQG…GDSG). Pro-46 bears the Hydroxyproline mark. The tract at residues 48-102 (KDGLDGAKGEKGEPGQGLIGLQGLPGMVGPQGSPGIPGLPGLKGQKGDSGIDPGN) is disordered. A compositionally biased stretch (basic and acidic residues) spans 49 to 60 (DGLDGAKGEKGE). Pro-72, Pro-81, and Pro-87 each carry hydroxyproline. The stretch at 104–122 (LANLRSELDNIKKWLIFAQ) forms a coiled coil. The region spanning 126–237 (VGKKLYLTNG…CSSQLSAVCE (112 aa)) is the C-type lectin domain. 2 disulfides stabilise this stretch: Cys-147/Cys-236 and Cys-214/Cys-228.

Interacts with MASP1 and MASP2. Interacts with MEP1A and MEP1B and may inhibit their catalytic activity. Forms oligomeric complexes of 2 or 3 homotrimers. As to expression, expressed in liver. Weakly expressed in kidney and testis.

It localises to the secreted. In terms of biological role, calcium-dependent lectin involved in innate immune defense. Binds mannose, fucose and N-acetylglucosamine on different microorganisms and activates the lectin complement pathway. Binds to late apoptotic cells, as well as to apoptotic blebs and to necrotic cells, but not to early apoptotic cells, facilitating their uptake by macrophages. According to some authors, it only binds mannose. In Sus scrofa (Pig), this protein is Mannose-binding protein C.